The chain runs to 228 residues: Cytidylate kinase (228 aa).

17–25 serves as a coordination point for ATP; the sequence is GPTASGKGT.

This sequence belongs to the cytidylate kinase family. Type 1 subfamily.

It is found in the cytoplasm. The catalysed reaction is CMP + ATP = CDP + ADP. It carries out the reaction dCMP + ATP = dCDP + ADP. The protein is Cytidylate kinase of Paraburkholderia phymatum (strain DSM 17167 / CIP 108236 / LMG 21445 / STM815) (Burkholderia phymatum).